Here is a 447-residue protein sequence, read N- to C-terminus: Glutamyl-tRNA(Gln) amidotransferase subunit A (447 aa).

Active-site charge relay system residues include K50 and S125. Residue S149 is the Acyl-ester intermediate of the active site.

The protein belongs to the amidase family. GatA subfamily. In terms of assembly, heterotrimer of A, B and C subunits.

It catalyses the reaction L-glutamyl-tRNA(Gln) + L-glutamine + ATP + H2O = L-glutaminyl-tRNA(Gln) + L-glutamate + ADP + phosphate + H(+). In terms of biological role, allows the formation of correctly charged Gln-tRNA(Gln) through the transamidation of misacylated Glu-tRNA(Gln) in organisms which lack glutaminyl-tRNA synthetase. The reaction takes place in the presence of glutamine and ATP through an activated gamma-phospho-Glu-tRNA(Gln). The sequence is that of Glutamyl-tRNA(Gln) amidotransferase subunit A from Sulfurimonas denitrificans (strain ATCC 33889 / DSM 1251) (Thiomicrospira denitrificans (strain ATCC 33889 / DSM 1251)).